Here is a 93-residue protein sequence, read N- to C-terminus: Small ribosomal subunit protein bS18c (93 aa).

It belongs to the bacterial ribosomal protein bS18 family. Part of the 30S ribosomal subunit.

It localises to the plastid. It is found in the chloroplast. The polypeptide is Small ribosomal subunit protein bS18c (Pinus koraiensis (Korean pine)).